A 239-amino-acid chain; its full sequence is MINNVISPEFDENGRALRRVRSFVRRQGRLTNRQQQALDNLWPKIGVEYQAEKLELGALFGREAPVVLEIGFGMGASLVTMASQNPEKDFLGIEVHVPGVGACLASAEDENIGNLRVMCHDAIEVLENMIPDNRLEMVQLFFPDPWHKVRHNKRRIVQPPFAELIKSKLKVGGVFHMATDWQPYAEHMLEVMNGVDNYLNLSENGDYVPRPSSRPITKFELRGQRLGHGVWDIMFKRIK.

S-adenosyl-L-methionine is bound by residues E69, E94, D121, and D144. D144 is an active-site residue. K148 is a substrate binding site. The interaction with RNA stretch occupies residues 150 to 155 (RHNKRR). Residues D180 and 217–220 (TKFE) each bind substrate.

This sequence belongs to the class I-like SAM-binding methyltransferase superfamily. TrmB family. As to quaternary structure, monomer.

It catalyses the reaction guanosine(46) in tRNA + S-adenosyl-L-methionine = N(7)-methylguanosine(46) in tRNA + S-adenosyl-L-homocysteine. The protein operates within tRNA modification; N(7)-methylguanine-tRNA biosynthesis. Its function is as follows. Catalyzes the formation of N(7)-methylguanine at position 46 (m7G46) in tRNA. This chain is tRNA (guanine-N(7)-)-methyltransferase, found in Photorhabdus laumondii subsp. laumondii (strain DSM 15139 / CIP 105565 / TT01) (Photorhabdus luminescens subsp. laumondii).